Here is a 206-residue protein sequence, read N- to C-terminus: Ubiquitin-conjugating enzyme E2 S (206 aa).

Residues 14–160 enclose the UBC core domain; that stretch reads QTIRQVMKEL…ARMMTEIHAQ (147 aa). Cys98 serves as the catalytic Glycyl thioester intermediate. The tract at residues 165–191 is disordered; the sequence is GVSDAKDDDGPSNKKHAGLDKKLQDKK. A compositionally biased stretch (basic and acidic residues) spans 168 to 191; that stretch reads DAKDDDGPSNKKHAGLDKKLQDKK.

The protein belongs to the ubiquitin-conjugating enzyme family.

It catalyses the reaction S-ubiquitinyl-[E1 ubiquitin-activating enzyme]-L-cysteine + [E2 ubiquitin-conjugating enzyme]-L-cysteine = [E1 ubiquitin-activating enzyme]-L-cysteine + S-ubiquitinyl-[E2 ubiquitin-conjugating enzyme]-L-cysteine.. The protein operates within protein modification; protein ubiquitination. Its function is as follows. Catalyzes the covalent attachment of ubiquitin to other proteins. Acts as an essential factor of the anaphase promoting complex/cyclosome (APC/C), a cell cycle-regulated ubiquitin ligase that controls progression through mitosis. Acts by specifically elongating polyubiquitin chains initiated by the E2 enzyme vih/UbcH10 on APC/C substrates, enhancing the degradation of APC/C substrates by the proteasome and promoting mitotic exit. In Drosophila mojavensis (Fruit fly), this protein is Ubiquitin-conjugating enzyme E2 S.